The following is a 267-amino-acid chain: Dihydropteroate synthase (267 aa).

Positions 1-251 (MTKTKIMGIL…NVELNAKLAK (251 aa)) constitute a Pterin-binding domain. Asn-11 lines the Mg(2+) pocket. Residues Thr-51, Asp-84, Asn-103, Asp-167, Lys-203, and 239-241 (RVH) contribute to the (7,8-dihydropterin-6-yl)methyl diphosphate site.

This sequence belongs to the DHPS family. As to quaternary structure, homodimer. It depends on Mg(2+) as a cofactor.

It carries out the reaction (7,8-dihydropterin-6-yl)methyl diphosphate + 4-aminobenzoate = 7,8-dihydropteroate + diphosphate. It functions in the pathway cofactor biosynthesis; tetrahydrofolate biosynthesis; 7,8-dihydrofolate from 2-amino-4-hydroxy-6-hydroxymethyl-7,8-dihydropteridine diphosphate and 4-aminobenzoate: step 1/2. Its function is as follows. Catalyzes the condensation of para-aminobenzoate (pABA) with 6-hydroxymethyl-7,8-dihydropterin diphosphate (DHPt-PP) to form 7,8-dihydropteroate (H2Pte), the immediate precursor of folate derivatives. The sequence is that of Dihydropteroate synthase (folP) from Staphylococcus aureus (strain MW2).